The sequence spans 1087 residues: Fanconi-associated nuclease 1 homolog (1087 aa).

Disordered regions lie at residues 1-79, 104-154, 169-202, 459-486, 816-835, and 842-871; these read MKSN…TPIK, FQKA…PNNL, EFLL…NNIT, TQNS…NNNI, ITSD…EKEN, and SVKK…EEEI. Over residues 41–79 the composition is skewed to low complexity; that stretch reads TTTPPKTPTQPIRFTQNNNKENDKSNNNNNNNNTITPIK. Residues 104–115 are compositionally biased toward polar residues; sequence FQKASTPSSPQI. Low complexity-rich tracts occupy residues 118–154, 182–202, and 467–485; these read KLPQ…PNNL, NTTT…NNIT, and NNNN…NNNN. Coiled-coil stretches lie at residues 419–490 and 830–874; these read WKSK…KEYD and KIEK…IIEI. Over residues 848-871 the composition is skewed to acidic residues; the sequence is EQEEEEEEEEEGQGQEEEEEEEEI. Residues Glu-899, Asp-1023, Glu-1051, and Val-1052 each coordinate Mn(2+). The region spanning 961–1083 is the VRR-NUC domain; it reads DDLLILLNQS…GCDVEVCLVK (123 aa).

This sequence belongs to the FAN1 family. It depends on Mn(2+) as a cofactor. Requires Mg(2+) as cofactor.

It carries out the reaction Hydrolytically removes 5'-nucleotides successively from the 3'-hydroxy termini of 3'-hydroxy-terminated oligonucleotides.. In terms of biological role, nuclease required for the repair of DNA interstrand cross-links (ICL). Acts as a 5'-3' exonuclease that anchors at a cut end of DNA and cleaves DNA successively at every third nucleotide, allowing to excise an ICL from one strand through flanking incisions. The chain is Fanconi-associated nuclease 1 homolog (mtmr15) from Dictyostelium discoideum (Social amoeba).